We begin with the raw amino-acid sequence, 1925 residues long: Diacylglycerol kinase eta (1925 aa).

The region spanning 82 to 175 (AIIREGYLMK…WLGSLKTATA (94 aa)) is the PH domain. 2 consecutive Phorbol-ester/DAG-type zinc fingers follow at residues 195–245 (HHHW…IANC) and 268–319 (PHQW…PIVC). The region spanning 350-486 (GNFSPLLVFV…DRWSIMVFEK (137 aa)) is the DAGKc domain. Disordered stretches follow at residues 620–641 (EKDN…SEKE), 783–805 (ANID…TPTE), 847–872 (DKER…SEPQ), 1013–1065 (TTLC…NPQQ), 1113–1141 (DRNS…TRTY), 1167–1234 (NTTT…SSAS), 1256–1276 (IRRH…KDKD), and 1385–1405 (FSAG…PTEE). The span at 792–802 (LSPSSEAGENT) shows a compositional bias: polar residues. Positions 863–872 (ADVNEKSEPQ) are enriched in basic and acidic residues. Residues 1115–1128 (NSGDNHNDNGKNEE) are compositionally biased toward basic and acidic residues. Over residues 1167 to 1187 (NTTTSTSSSISTTTTTSTTST) the composition is skewed to low complexity. The span at 1386–1405 (SAGDKDEKPGKDKERTPTEE) shows a compositional bias: basic and acidic residues. The SAM domain occupies 1862–1925 (WSVNEVVTWL…LQAIKDLSEN (64 aa)).

The protein belongs to the eukaryotic diacylglycerol kinase family.

The protein localises to the cytoplasm. The enzyme catalyses a 1,2-diacyl-sn-glycerol + ATP = a 1,2-diacyl-sn-glycero-3-phosphate + ADP + H(+). Phosphorylates diacylglycerol (DAG) to generate phosphatidic acid (PA). The polypeptide is Diacylglycerol kinase eta (Drosophila mojavensis (Fruit fly)).